A 78-amino-acid chain; its full sequence is Large ribosomal subunit protein bL28 (78 aa).

The tract at residues 1-21 (MSRVCQVTGKSPITGNNVSHA) is disordered. The segment covering 8 to 21 (TGKSPITGNNVSHA) has biased composition (polar residues).

The protein belongs to the bacterial ribosomal protein bL28 family.

In Hahella chejuensis (strain KCTC 2396), this protein is Large ribosomal subunit protein bL28.